Reading from the N-terminus, the 556-residue chain is Arginine--tRNA ligase (556 aa).

The short motif at 132-142 is the 'HIGH' region element; sequence VNPTGDLHLGH.

It belongs to the class-I aminoacyl-tRNA synthetase family. Monomer.

The protein resides in the cytoplasm. The enzyme catalyses tRNA(Arg) + L-arginine + ATP = L-arginyl-tRNA(Arg) + AMP + diphosphate. In Oceanobacillus iheyensis (strain DSM 14371 / CIP 107618 / JCM 11309 / KCTC 3954 / HTE831), this protein is Arginine--tRNA ligase.